The sequence spans 156 residues: Movement protein P17 (156 aa).

The interval 38–54 (AEDVEEEAIAAQEELEF) is homodimerization. The interval 57–156 (DEAQARHSCL…RAAPKLIKRG (100 aa)) is RNA-binding. Residues Ser-71, Ser-79, Ser-137, and Ser-140 each carry the phosphoserine modification. The segment at 106–156 (ASYFSSSARPLPPPPAPSLMSWTPIAKYHPSSPTSTSSKLRRAAPKLIKRG) is disordered. The span at 144–156 (KLRRAAPKLIKRG) shows a compositional bias: basic residues.

Belongs to the polerovirus movement protein family. In terms of assembly, homodimer. Post-translationally, expressed as a nonphosphorylated 20kDa form and a phosphorylated 22kDa form. Phosphorylated by a host PKC-related kinase. Serine phosphorylation is required for plamodesma targeting.

It localises to the host cell junction. It is found in the host plasmodesma. The protein localises to the host chloroplast envelope. Its subcellular location is the host Golgi apparatus. The protein resides in the host mitochondrion outer membrane. Together with movement protein P3a, facilitates long-distance movement of virions in host. Transports viral genome to neighboring plant cells directly through plasmosdesmata, without any budding. The movement protein allows efficient cell to cell propagation, by bypassing the host cell wall barrier. Binds ssRNA. This is Movement protein P17 from Solanum tuberosum (Potato).